The chain runs to 588 residues: Putative ABC transporter ATP-binding protein PAM_020 (588 aa).

ABC transporter domains lie at Ile-6–Glu-247 and Leu-317–Asn-551. ATP contacts are provided by residues Gly-40–Ser-47 and Gly-351–Ser-358.

The protein belongs to the ABC transporter superfamily.

The protein localises to the cell membrane. Probably part of an ABC transporter complex. Responsible for energy coupling to the transport system. The chain is Putative ABC transporter ATP-binding protein PAM_020 from Onion yellows phytoplasma (strain OY-M).